The sequence spans 346 residues: Dihydroorotase (346 aa).

Zn(2+) contacts are provided by H14 and H16. Substrate contacts are provided by residues 16–18 (HLR) and N42. K100, H137, and H175 together coordinate Zn(2+). K100 is modified (N6-carboxylysine). Residue H137 coordinates substrate. Residue L220 participates in substrate binding. D248 lines the Zn(2+) pocket. D248 is an active-site residue. Substrate is bound by residues H252 and A264.

This sequence belongs to the metallo-dependent hydrolases superfamily. DHOase family. Class II DHOase subfamily. As to quaternary structure, homodimer. Requires Zn(2+) as cofactor.

The enzyme catalyses (S)-dihydroorotate + H2O = N-carbamoyl-L-aspartate + H(+). The protein operates within pyrimidine metabolism; UMP biosynthesis via de novo pathway; (S)-dihydroorotate from bicarbonate: step 3/3. Functionally, catalyzes the reversible cyclization of carbamoyl aspartate to dihydroorotate. The polypeptide is Dihydroorotase (Ruegeria sp. (strain TM1040) (Silicibacter sp.)).